A 229-amino-acid polypeptide reads, in one-letter code: Large ribosomal subunit protein uL1 (229 aa).

It belongs to the universal ribosomal protein uL1 family. Part of the 50S ribosomal subunit.

Functionally, binds directly to 23S rRNA. The L1 stalk is quite mobile in the ribosome, and is involved in E site tRNA release. Its function is as follows. Protein L1 is also a translational repressor protein, it controls the translation of the L11 operon by binding to its mRNA. This chain is Large ribosomal subunit protein uL1, found in Streptococcus equi subsp. zooepidemicus (strain MGCS10565).